The chain runs to 362 residues: MSLQSIKYTRGSLEILDQLLLPVQSKYLPVRGVEDGWKVINKMQVRGAPAIAIVGCLSLAVEIHPEEFDSKKSLRQELEGKLNYLVSARPTAVNMKMAADELLSLANDLTKDDNVDVAAMKQRFLNATEAMLKKDIADNRAIGAHGAKAILQLVAAAAGAPMAGPVRVLTHCNTGSLATAGYGTALGVVRQLSELGKLEHIYCTETRPYNQGARLTAYELVHEKFPATLVLDSMVAALLRAKNVAAVVVGADRVAANGDTANKIGTYQIAVVAKHHGVPFFVAAPLTSIDLHIPSGDHIIIEERPDREMTHVGEHRIAAPGINCWNPAFDVTPASLITGIITERGVFQPAQLKETITKLLET.

The active-site Proton donor is Asp252.

The protein belongs to the eIF-2B alpha/beta/delta subunits family. MtnA subfamily.

It localises to the cytoplasm. It is found in the nucleus. It catalyses the reaction 5-(methylsulfanyl)-alpha-D-ribose 1-phosphate = 5-(methylsulfanyl)-D-ribulose 1-phosphate. It participates in amino-acid biosynthesis; L-methionine biosynthesis via salvage pathway; L-methionine from S-methyl-5-thio-alpha-D-ribose 1-phosphate: step 1/6. In terms of biological role, catalyzes the interconversion of methylthioribose-1-phosphate (MTR-1-P) into methylthioribulose-1-phosphate (MTRu-1-P). The protein is Methylthioribose-1-phosphate isomerase of Drosophila persimilis (Fruit fly).